The chain runs to 197 residues: Probable nicotinate-nucleotide adenylyltransferase (197 aa).

It belongs to the NadD family.

The enzyme catalyses nicotinate beta-D-ribonucleotide + ATP + H(+) = deamido-NAD(+) + diphosphate. Its pathway is cofactor biosynthesis; NAD(+) biosynthesis; deamido-NAD(+) from nicotinate D-ribonucleotide: step 1/1. In terms of biological role, catalyzes the reversible adenylation of nicotinate mononucleotide (NaMN) to nicotinic acid adenine dinucleotide (NaAD). The chain is Probable nicotinate-nucleotide adenylyltransferase from Chlorobium phaeobacteroides (strain DSM 266 / SMG 266 / 2430).